The sequence spans 408 residues: Broad specificity amino-acid racemase (408 aa).

An N-terminal signal peptide occupies residues 1–24; the sequence is MNFKKTLLSIAIASASLTPAFSYS. Cysteine 71 and cysteine 97 are oxidised to a cystine. Lysine 75 acts as the Proton acceptor in catalysis. N6-(pyridoxal phosphate)lysine is present on lysine 75. A substrate-binding site is contributed by arginine 174. The Proton acceptor role is filled by tyrosine 300. Methionine 348 lines the substrate pocket.

Belongs to the alanine racemase family. Bsr subfamily. The cofactor is pyridoxal 5'-phosphate.

It localises to the periplasm. It catalyses the reaction an L-alpha-amino acid = a D-alpha-amino acid. The catalysed reaction is L-lysine = D-lysine. The enzyme catalyses L-arginine = D-arginine. In terms of biological role, amino-acid racemase able to utilize a broad range of substrates. The chain is Broad specificity amino-acid racemase (alr) from Vibrio vulnificus (strain CMCP6).